Consider the following 266-residue polypeptide: Tryptophan synthase alpha chain (266 aa).

Residues glutamate 52 and aspartate 63 each act as proton acceptor in the active site.

This sequence belongs to the TrpA family. Tetramer of two alpha and two beta chains.

It carries out the reaction (1S,2R)-1-C-(indol-3-yl)glycerol 3-phosphate + L-serine = D-glyceraldehyde 3-phosphate + L-tryptophan + H2O. Its pathway is amino-acid biosynthesis; L-tryptophan biosynthesis; L-tryptophan from chorismate: step 5/5. In terms of biological role, the alpha subunit is responsible for the aldol cleavage of indoleglycerol phosphate to indole and glyceraldehyde 3-phosphate. The protein is Tryptophan synthase alpha chain of Nocardia farcinica (strain IFM 10152).